A 474-amino-acid chain; its full sequence is Uronate isomerase (474 aa).

Belongs to the metallo-dependent hydrolases superfamily. Uronate isomerase family.

It carries out the reaction D-glucuronate = D-fructuronate. It catalyses the reaction aldehydo-D-galacturonate = keto-D-tagaturonate. The protein operates within carbohydrate metabolism; pentose and glucuronate interconversion. The chain is Uronate isomerase from Photorhabdus laumondii subsp. laumondii (strain DSM 15139 / CIP 105565 / TT01) (Photorhabdus luminescens subsp. laumondii).